Here is a 431-residue protein sequence, read N- to C-terminus: Adenylosuccinate synthetase (431 aa).

GTP is bound by residues 15 to 21 (GDEGKGK) and 43 to 45 (GHT). Asp16 functions as the Proton acceptor in the catalytic mechanism. Mg(2+)-binding residues include Asp16 and Gly43. IMP contacts are provided by residues 16-19 (DEGK), 41-44 (NAGH), Thr135, Arg149, Asn227, Thr242, and Arg306. His44 (proton donor) is an active-site residue. Residue 302-308 (VTTGRKR) participates in substrate binding. Residues Arg308, 334 to 336 (KLD), and 416 to 418 (GVG) contribute to the GTP site.

Belongs to the adenylosuccinate synthetase family. As to quaternary structure, homodimer. It depends on Mg(2+) as a cofactor.

The protein localises to the cytoplasm. The enzyme catalyses IMP + L-aspartate + GTP = N(6)-(1,2-dicarboxyethyl)-AMP + GDP + phosphate + 2 H(+). Its pathway is purine metabolism; AMP biosynthesis via de novo pathway; AMP from IMP: step 1/2. Its function is as follows. Plays an important role in the de novo pathway and in the salvage pathway of purine nucleotide biosynthesis. Catalyzes the first committed step in the biosynthesis of AMP from IMP. This Monosiga brevicollis (Choanoflagellate) protein is Adenylosuccinate synthetase.